Consider the following 208-residue polypeptide: MFIKICGIKTPNELKIIEKYGDFTGVILECVSKRKIGVESAKNLIEISNIPVFAVSTTTEVLAWKNIIELTGTNYLQMHSNIDSKSVEAIKKEYGCFIMKSFKIPEKSEFPEIDAENIILDIERYEVDRILLDTGKGCGMVHDHRISQIIAKKFDIVLAGGLNTDNVSEIIKKVKPFGVDVSSGVENKNSKDEGLIKKFYENVKSVKL.

It belongs to the TrpF family.

The enzyme catalyses N-(5-phospho-beta-D-ribosyl)anthranilate = 1-(2-carboxyphenylamino)-1-deoxy-D-ribulose 5-phosphate. Its pathway is amino-acid biosynthesis; L-tryptophan biosynthesis; L-tryptophan from chorismate: step 3/5. This chain is N-(5'-phosphoribosyl)anthranilate isomerase, found in Methanococcus vannielii (strain ATCC 35089 / DSM 1224 / JCM 13029 / OCM 148 / SB).